A 469-amino-acid chain; its full sequence is COP9 signalosome complex subunit 5 (469 aa).

The MPN domain maps to 63–200 (TYISSLALCK…IGAFRTFPDN (138 aa)). The Zn(2+) site is built by histidine 146, histidine 148, and aspartate 159. A JAMM motif motif is present at residues 146–159 (HSHPGYGCWLSGID). Disordered stretches follow at residues 201–220 (YKSPDSAAPTNNTRGVPPSK) and 331–404 (YDSF…KRPM). The segment covering 344 to 353 (DEMDDESDLD) has biased composition (acidic residues).

It belongs to the peptidase M67A family. CSN5 subfamily. As to quaternary structure, component of the COP9 signalosome (CSN) complex.

It is found in the cytoplasm. The protein localises to the nucleus. Catalytic Component of the COP9 signalosome (CSN) complex that acts as an regulator of the ubiquitin (Ubl) conjugation pathway by mediating the deneddylation of the cullin subunit of SCF-type E3 ubiquitin-protein ligase complexes. The CSN complex is involved in the regulation of the mating pheromone response. In Debaryomyces hansenii (strain ATCC 36239 / CBS 767 / BCRC 21394 / JCM 1990 / NBRC 0083 / IGC 2968) (Yeast), this protein is COP9 signalosome complex subunit 5 (RRI1).